An 89-amino-acid polypeptide reads, in one-letter code: Small ribosomal subunit protein bS16 (89 aa).

Belongs to the bacterial ribosomal protein bS16 family.

This is Small ribosomal subunit protein bS16 from Desulforamulus reducens (strain ATCC BAA-1160 / DSM 100696 / MI-1) (Desulfotomaculum reducens).